We begin with the raw amino-acid sequence, 296 residues long: Bifunctional protein FolD (296 aa).

NADP(+) is bound by residues 168-170, S197, and T238; that span reads GRS.

It belongs to the tetrahydrofolate dehydrogenase/cyclohydrolase family. As to quaternary structure, homodimer.

It catalyses the reaction (6R)-5,10-methylene-5,6,7,8-tetrahydrofolate + NADP(+) = (6R)-5,10-methenyltetrahydrofolate + NADPH. The enzyme catalyses (6R)-5,10-methenyltetrahydrofolate + H2O = (6R)-10-formyltetrahydrofolate + H(+). The protein operates within one-carbon metabolism; tetrahydrofolate interconversion. Functionally, catalyzes the oxidation of 5,10-methylenetetrahydrofolate to 5,10-methenyltetrahydrofolate and then the hydrolysis of 5,10-methenyltetrahydrofolate to 10-formyltetrahydrofolate. The protein is Bifunctional protein FolD of Porphyromonas gingivalis (strain ATCC BAA-308 / W83).